The chain runs to 212 residues: Thymidylate kinase (212 aa).

11-18 (GMEGAGKS) is an ATP binding site.

Belongs to the thymidylate kinase family.

It catalyses the reaction dTMP + ATP = dTDP + ADP. Phosphorylation of dTMP to form dTDP in both de novo and salvage pathways of dTTP synthesis. The protein is Thymidylate kinase of Colwellia psychrerythraea (strain 34H / ATCC BAA-681) (Vibrio psychroerythus).